The sequence spans 221 residues: Epididymal secretory glutathione peroxidase (221 aa).

Positions 1–21 are cleaved as a signal peptide; that stretch reads MAIQLRVFYLVPLLLASYVQT. Cys73 is an active-site residue.

It belongs to the glutathione peroxidase family. Epididymis.

The protein localises to the secreted. The enzyme catalyses 2 glutathione + H2O2 = glutathione disulfide + 2 H2O. Protects cells and enzymes from oxidative damage, by catalyzing the reduction of hydrogen peroxide, lipid peroxides and organic hydroperoxide, by glutathione. May constitute a glutathione peroxidase-like protective system against peroxide damage in sperm membrane lipids. The chain is Epididymal secretory glutathione peroxidase (Gpx5) from Rattus norvegicus (Rat).